Reading from the N-terminus, the 154-residue chain is Myoglobin (154 aa).

A Globin domain is found at 2-148 (GLSDDEWNHV…FRNDMASKYK (147 aa)). Residue His-65 coordinates nitrite. O2 is bound at residue His-65. Position 94 (His-94) interacts with heme b.

This sequence belongs to the globin family. As to quaternary structure, monomeric.

It localises to the cytoplasm. The protein resides in the sarcoplasm. It catalyses the reaction Fe(III)-heme b-[protein] + nitric oxide + H2O = Fe(II)-heme b-[protein] + nitrite + 2 H(+). It carries out the reaction H2O2 + AH2 = A + 2 H2O. In terms of biological role, monomeric heme protein which primary function is to store oxygen and facilitate its diffusion within muscle tissues. Reversibly binds oxygen through a pentacoordinated heme iron and enables its timely and efficient release as needed during periods of heightened demand. Depending on the oxidative conditions of tissues and cells, and in addition to its ability to bind oxygen, it also has a nitrite reductase activity whereby it regulates the production of bioactive nitric oxide. Under stress conditions, like hypoxia and anoxia, it also protects cells against reactive oxygen species thanks to its pseudoperoxidase activity. This Caretta caretta (Loggerhead sea turtle) protein is Myoglobin (MB).